Consider the following 609-residue polypeptide: MEQNSNSSVADTFAEAPATDADYGTENCSGSGMSVGDTVSANHEFQTMKPGPGVVHKVMPVANSASSATATNGRTRSEMPHSELVKMLYYLEGELQARDVCIAALRNERVKQLIAQLRTKRLQPNDPYAAIFRDKIALNGNLISRESSTQAAQAEMEVRQIIEQQMEQQYQMVSKQRATHVRMVNILTESLENNQRMLQELEEEKRKHENTTAQGDDITYGLELERNKLKQDLEEERAQVAKMEKDLKKLQETLEYERNRQKQIVLLLIAERKKILMKYIEEGKRSEDLAQILAEEKQRSDTIAEGLEEESKKSLRMEEELEKQTHAMEQERKVLFAKLAKEELRVKELEQELNALRSEHEALKKQQQLGGSGSSVAAAKARQFSDDACATPPMVNIAKIVQPTATVSSMPVSGPQTGIARSIAPGQNIRSAGIATAPTGTATAAIAPLTAVLNHTTTITTTTNNTTTSSNSNSSGSIGVAATAAAVAASVETAATVTVPMVAPPSPSPAKMQPTATIQRAPGGKYAALAAAAALDQTTTPHPHPVPIAVPPVTVPPAGARGAPPPIPTKPIVPPKREPSLSRLGSITGSSAIAAATAATTAAGTAKQN.

The span at 1 to 10 (MEQNSNSSVA) shows a compositional bias: polar residues. Positions 1 to 29 (MEQNSNSSVADTFAEAPATDADYGTENCS) are disordered. Coiled coils occupy residues 182 to 264 (RMVN…QKQI) and 303 to 370 (IAEG…QQLG). The disordered stretch occupies residues 556–584 (PPAGARGAPPPIPTKPIVPPKREPSLSRL). Residues 563–574 (APPPIPTKPIVP) show a composition bias toward pro residues. Position 586 is a phosphoserine (Ser-586).

It localises to the cell projection. It is found in the lamellipodium. The protein localises to the cytoplasm. Its subcellular location is the cytoskeleton. The protein resides in the stress fiber. Functionally, regulates lamellipodial actin dynamics in a Cortactin-dependent manner and is therefore likely involved in controlling actin branch density, actin-retrograde flow rates and lamellipodial protrusion. Functions by slowing the dissociation of Cortactin from Arp2/3 nucleated branches thereby increasing branch nucleation and junction stability. Associates with core striatin-interacting phosphatase and kinase (STRIPAK) complex to form CTTNBP2NL-STRIPAK complexes. STRIPAK complexes have critical roles in protein (de)phosphorylation and are regulators of multiple signaling pathways including Hippo, MAPK, nuclear receptor and cytoskeleton remodeling. Different types of STRIPAK complexes are involved in a variety of biological processes such as cell growth, differentiation, apoptosis, metabolism and immune regulation. This chain is CTTNBP2 N-terminal-like protein, found in Drosophila melanogaster (Fruit fly).